A 316-amino-acid chain; its full sequence is MTVQTTTIGIVGARGHTGSELIKLVAAHPHLQLVFVSSRELAGQRVAEHNQAYQAELRYESLDANAVAAKAADVVILALPNGNAAPFVAAIDAATPQTLVIDLSTDYRFDPAWYYGLPELTRGSYAGQKRISNPGCYATAMQLTIAPLLDQLAGPPQCFGVSGYSGAGTTPSDKNNPALLADNLMPYALTNHMHEREVSAQLGVPVEFMPHVAPHFRGITLTVNLWLQQPLTREQIQARYTQRYADEPLIEIVDEAPWVSRIAGRHGVQIGGVTLAPGNKRVVVVATLDNLLKGAATQAMQNLNLALGWDELTAIG.

The active site involves Cys136.

The protein belongs to the NAGSA dehydrogenase family. Type 1 subfamily.

The protein localises to the cytoplasm. The catalysed reaction is N-acetyl-L-glutamate 5-semialdehyde + phosphate + NADP(+) = N-acetyl-L-glutamyl 5-phosphate + NADPH + H(+). It participates in amino-acid biosynthesis; L-arginine biosynthesis; N(2)-acetyl-L-ornithine from L-glutamate: step 3/4. In terms of biological role, catalyzes the NADPH-dependent reduction of N-acetyl-5-glutamyl phosphate to yield N-acetyl-L-glutamate 5-semialdehyde. The protein is N-acetyl-gamma-glutamyl-phosphate reductase of Xanthomonas oryzae pv. oryzae (strain MAFF 311018).